The sequence spans 216 residues: Lipoprotein-releasing system ATP-binding protein LolD (216 aa).

The ABC transporter domain occupies 2–216 (IHLEGITKSF…TIHMVDGNII (215 aa)). Residue 34-41 (GPSGAGKT) coordinates ATP.

This sequence belongs to the ABC transporter superfamily. Lipoprotein translocase (TC 3.A.1.125) family. The complex is composed of two ATP-binding proteins (LolD) and two transmembrane proteins (LolC and LolE).

It localises to the cell inner membrane. In terms of biological role, part of the ABC transporter complex LolCDE involved in the translocation of mature outer membrane-directed lipoproteins, from the inner membrane to the periplasmic chaperone, LolA. Responsible for the formation of the LolA-lipoprotein complex in an ATP-dependent manner. The polypeptide is Lipoprotein-releasing system ATP-binding protein LolD (Bacteroides fragilis (strain YCH46)).